Reading from the N-terminus, the 389-residue chain is Multidrug resistance protein 1 (389 aa).

11 helical membrane-spanning segments follow: residues 6–26, 42–62, 71–91, 102–122, 134–154, 160–180, 202–222, 243–263, 286–306, 336–356, and 358–378; these read ITLT…GLVI, AVGY…PIAG, KIMI…FGIG, MLGG…IADI, YMSA…GFLA, LPFF…ILTL, IFAP…FGLA, IAIM…VLFD, VFLL…VTVF, SMFT…LFDI, and VNYP…LTIA.

Belongs to the major facilitator superfamily. TCR/Tet family.

The protein localises to the cell membrane. Its function is as follows. Energy-dependent efflux pump responsible for decreased drug accumulation in multi-drug-resistant cells. Probably uses a transmembrane proton gradient as the energy source. Causes the efflux of a variety of toxic substances, including such structurally diverse compounds as ethidium bromide, rhodamine and acridine dyes, tetraphenylphosphonium, puromycin, chloramphenicol, doxorubicin, and fluoroquinolone antibiotics. In Bacillus subtilis (strain 168), this protein is Multidrug resistance protein 1 (bmr).